Reading from the N-terminus, the 85-residue chain is Large ribosomal subunit protein bL27 (85 aa).

The interval 1–21 (MAHKKAAGSTKNGRDSNAKRL) is disordered.

This sequence belongs to the bacterial ribosomal protein bL27 family.

The chain is Large ribosomal subunit protein bL27 from Hydrogenovibrio crunogenus (strain DSM 25203 / XCL-2) (Thiomicrospira crunogena).